The primary structure comprises 545 residues: MVVSLSFPEADPALSSPGAQQLHQDEAQVVVELTANDKPSLSWECPQGPGCGLQNTGNSCYLNAALQCLTHTPPLADYMLSQEYSQTCCSPEGCKMCAMEAHVTQSLLHSHSGDVMKPSQILTSAFHKHQQEDAHEFLMFTLETMHESCLQVHRQSEPTSEDSSPIHDIFGGLWRSQIKCLHCQGTSDTYDRFLDVPLDISSAQSVNQALWDTEKSEELRGENAYYCGRCRQKMPASKTLHIHSAPKVLLLVLKRFSAFMGNKLDRKVSYPEFLDLKPYLSQPTGGPLPYALYAVLVHEGATCHSGHYFSYVKARHGAWYKMDDTKVTSCDVTSVLNENAYVLFYVQQTDLKQVSIDMPEGRVHEVLDPEYQLKKSRRKKHKKKSPCTEDAGEPCKNREKRATKETSLGEGKVLQEKNHKKAGQKHENTKLVPQEQNHQKLGQKHRINEILPQEQNHQKAGQSLRNTEGELDLPADAIVIHLLRSTENWGRDAPDKENQPWHNADRLLTSQDPVNTGQLCRQEGRRRSKKGKNKNKQGQRLLLVC.

The 298-residue stretch at 51-348 (CGLQNTGNSC…NAYVLFYVQQ (298 aa)) folds into the USP domain. Cys60 (nucleophile) is an active-site residue. The active-site Proton acceptor is the His307. 2 disordered regions span residues 368–442 (DPEY…QKLG) and 489–539 (WGRD…KQGQ). The span at 374-385 (KKSRRKKHKKKS) shows a compositional bias: basic residues. 2 stretches are compositionally biased toward basic and acidic residues: residues 393–404 (EPCKNREKRATK) and 489–505 (WGRDAPDKENQPWHNAD). The segment covering 508–519 (LTSQDPVNTGQL) has biased composition (polar residues). The segment covering 524–537 (GRRRSKKGKNKNKQ) has biased composition (basic residues).

It belongs to the peptidase C19 family. USP17 subfamily. Expressed in T cells.

The protein resides in the nucleus. It localises to the endoplasmic reticulum. The enzyme catalyses Thiol-dependent hydrolysis of ester, thioester, amide, peptide and isopeptide bonds formed by the C-terminal Gly of ubiquitin (a 76-residue protein attached to proteins as an intracellular targeting signal).. Functionally, deubiquitinating enzyme that removes conjugated ubiquitin from specific proteins to regulate different cellular processes. Important for preimplantation stage embryonic development. The chain is Ubiquitin carboxyl-terminal hydrolase 17-like protein C from Mus musculus (Mouse).